Here is a 378-residue protein sequence, read N- to C-terminus: Anhydro-N-acetylmuramic acid kinase (378 aa).

22–29 is a binding site for ATP; sequence GTSLDGAD.

It belongs to the anhydro-N-acetylmuramic acid kinase family.

It catalyses the reaction 1,6-anhydro-N-acetyl-beta-muramate + ATP + H2O = N-acetyl-D-muramate 6-phosphate + ADP + H(+). Its pathway is amino-sugar metabolism; 1,6-anhydro-N-acetylmuramate degradation. It participates in cell wall biogenesis; peptidoglycan recycling. In terms of biological role, catalyzes the specific phosphorylation of 1,6-anhydro-N-acetylmuramic acid (anhMurNAc) with the simultaneous cleavage of the 1,6-anhydro ring, generating MurNAc-6-P. Is required for the utilization of anhMurNAc either imported from the medium or derived from its own cell wall murein, and thus plays a role in cell wall recycling. This chain is Anhydro-N-acetylmuramic acid kinase, found in Bordetella petrii (strain ATCC BAA-461 / DSM 12804 / CCUG 43448).